The primary structure comprises 424 residues: Histidine--tRNA ligase (424 aa).

Belongs to the class-II aminoacyl-tRNA synthetase family. As to quaternary structure, homodimer.

The protein resides in the cytoplasm. It catalyses the reaction tRNA(His) + L-histidine + ATP = L-histidyl-tRNA(His) + AMP + diphosphate + H(+). The sequence is that of Histidine--tRNA ligase from Shewanella sediminis (strain HAW-EB3).